The chain runs to 427 residues: Kynureninase (427 aa).

Residues T104, T105, 132 to 135, D213, H216, and Y238 each bind pyridoxal 5'-phosphate; that span reads FPSD. N6-(pyridoxal phosphate)lysine is present on K239. The pyridoxal 5'-phosphate site is built by W267 and T295.

This sequence belongs to the kynureninase family. Homodimer. The cofactor is pyridoxal 5'-phosphate.

The enzyme catalyses L-kynurenine + H2O = anthranilate + L-alanine + H(+). The catalysed reaction is 3-hydroxy-L-kynurenine + H2O = 3-hydroxyanthranilate + L-alanine + H(+). The protein operates within amino-acid degradation; L-kynurenine degradation; L-alanine and anthranilate from L-kynurenine: step 1/1. Its pathway is cofactor biosynthesis; NAD(+) biosynthesis; quinolinate from L-kynurenine: step 2/3. Functionally, catalyzes the cleavage of L-kynurenine (L-Kyn) and L-3-hydroxykynurenine (L-3OHKyn) into anthranilic acid (AA) and 3-hydroxyanthranilic acid (3-OHAA), respectively. This is Kynureninase from Shouchella clausii (strain KSM-K16) (Alkalihalobacillus clausii).